Consider the following 289-residue polypeptide: Glucanase inhibitor protein 2 (289 aa).

An N-terminal signal peptide occupies residues 1–19 (MKVTATIAAASMAIAAASA). Positions 29–257 (ILGGSIIPSG…ALKWVNPIIK (229 aa)) constitute a Peptidase S1 domain. A disulfide bond links Cys56 and Cys72. N-linked (GlcNAc...) asparagine glycans are attached at residues Asn89, Asn104, and Asn109. Intrachain disulfides connect Cys180/Cys192 and Cys202/Cys233.

The protein belongs to the peptidase S1 family.

It localises to the secreted. In terms of biological role, secreted effector that suppresses host plant glucan elicitor-mediated defense responses. Targets host endoglucanases and inhibits the endoglucanase-mediated release of elicitor-active glucan oligosaccharides from P.sojae cell walls. The sequence is that of Glucanase inhibitor protein 2 from Phytophthora sojae (Soybean stem and root rot agent).